A 302-amino-acid chain; its full sequence is 4-hydroxy-tetrahydrodipicolinate synthase (302 aa).

Residue Thr-55 participates in pyruvate binding. Tyr-144 serves as the catalytic Proton donor/acceptor. Lys-172 (schiff-base intermediate with substrate) is an active-site residue. Val-214 contributes to the pyruvate binding site.

It belongs to the DapA family. In terms of assembly, homotetramer; dimer of dimers.

The protein resides in the cytoplasm. The enzyme catalyses L-aspartate 4-semialdehyde + pyruvate = (2S,4S)-4-hydroxy-2,3,4,5-tetrahydrodipicolinate + H2O + H(+). It participates in amino-acid biosynthesis; L-lysine biosynthesis via DAP pathway; (S)-tetrahydrodipicolinate from L-aspartate: step 3/4. In terms of biological role, catalyzes the condensation of (S)-aspartate-beta-semialdehyde [(S)-ASA] and pyruvate to 4-hydroxy-tetrahydrodipicolinate (HTPA). This chain is 4-hydroxy-tetrahydrodipicolinate synthase, found in Prochlorococcus marinus (strain SARG / CCMP1375 / SS120).